The chain runs to 570 residues: Sulfite reductase [NADPH] hemoprotein beta-component (570 aa).

Residues Cys434, Cys440, Cys479, and Cys483 each contribute to the [4Fe-4S] cluster site. Cys483 contributes to the siroheme binding site.

Belongs to the nitrite and sulfite reductase 4Fe-4S domain family. Alpha(8)-beta(8). The alpha component is a flavoprotein, the beta component is a hemoprotein. Requires siroheme as cofactor. [4Fe-4S] cluster serves as cofactor.

It carries out the reaction hydrogen sulfide + 3 NADP(+) + 3 H2O = sulfite + 3 NADPH + 4 H(+). It functions in the pathway sulfur metabolism; hydrogen sulfide biosynthesis; hydrogen sulfide from sulfite (NADPH route): step 1/1. Its function is as follows. Component of the sulfite reductase complex that catalyzes the 6-electron reduction of sulfite to sulfide. This is one of several activities required for the biosynthesis of L-cysteine from sulfate. In Salmonella dublin (strain CT_02021853), this protein is Sulfite reductase [NADPH] hemoprotein beta-component.